The sequence spans 246 residues: Uridylate kinase (246 aa).

18 to 21 (KVSG) lines the ATP pocket. G60 contacts UMP. ATP is bound by residues G61 and R65. Residues D80 and 141 to 148 (TGNPFFTT) each bind UMP. The ATP site is built by T168, Q169, Y174, and D177.

It belongs to the UMP kinase family. Homohexamer.

It is found in the cytoplasm. It carries out the reaction UMP + ATP = UDP + ADP. The protein operates within pyrimidine metabolism; CTP biosynthesis via de novo pathway; UDP from UMP (UMPK route): step 1/1. Inhibited by UTP. Catalyzes the reversible phosphorylation of UMP to UDP. The chain is Uridylate kinase from Gluconobacter oxydans (strain 621H) (Gluconobacter suboxydans).